Here is a 378-residue protein sequence, read N- to C-terminus: MDLLIVLTYVALAWAVFKIFRIPVNQWTLATAALGGVFLVSGLILLMNYNHPYTFTAQKAVIAIPITPQVTGIVTEVTDKNNQLIQKGEVLFKLDPVRYQARVDRLQADLMTATHNIKTLRAQLTEAQANTTQVSAERDRLFKNYQRYLKGSQAAVNPFSERDIDDARQNFLAQDALVKGSVAEQAQIQSQLDSMVNGEQSQIVSLRAQLTEAKYNLEQTVIRAPSNGYVTQVLIRPGTYAAALPLRPVMVFIPEQKRQIVAQFRQNSLLRLKPGDDAEVVFNALPGQVFHGKLTSILPVVPGGSYQAQGVLQSLTVVPGTDGVLGTIELDPNDDIDALPDGIYAQVAVYSDHFSHVSVMRKVLLRMTSWMHYLYLDH.

The Periplasmic portion of the chain corresponds to 1–3 (MDL). Residues 4–24 (LIVLTYVALAWAVFKIFRIPV) traverse the membrane as a helical segment. At 25–26 (NQ) the chain is on the cytoplasmic side. The helical transmembrane segment at 27–47 (WTLATAALGGVFLVSGLILLM) threads the bilayer. The Periplasmic segment spans residues 48-54 (NYNHPYT). A helical membrane pass occupies residues 55-75 (FTAQKAVIAIPITPQVTGIVT). The Cytoplasmic portion of the chain corresponds to 76 to 232 (EVTDKNNQLI…RAPSNGYVTQ (157 aa)). A helical transmembrane segment spans residues 233–253 (VLIRPGTYAAALPLRPVMVFI). Residues 254-280 (PEQKRQIVAQFRQNSLLRLKPGDDAEV) lie on the Periplasmic side of the membrane. A helical transmembrane segment spans residues 281-301 (VFNALPGQVFHGKLTSILPVV). Residues 302-309 (PGGSYQAQ) are Cytoplasmic-facing. Residues 310–330 (GVLQSLTVVPGTDGVLGTIEL) traverse the membrane as a helical segment. Over 331-378 (DPNDDIDALPDGIYAQVAVYSDHFSHVSVMRKVLLRMTSWMHYLYLDH) the chain is Periplasmic.

Belongs to the membrane fusion protein (MFP) (TC 8.A.1) family.

It localises to the cell inner membrane. The protein is Inner membrane protein YibH (yibH) of Escherichia coli O157:H7.